The following is a 316-amino-acid chain: Epoxide hydrolase 2 (316 aa).

Residues 25-302 form the AB hydrolase-1 domain; the sequence is PAVLFLHGFP…AAHFINQERP (278 aa). The active-site Nucleophile is Asp-101. Residue Tyr-150 participates in an epoxide binding. Tyr-230 serves as the catalytic Proton donor. His-295 acts as the Proton acceptor in catalysis.

The protein belongs to the AB hydrolase superfamily. Epoxide hydrolase family. As to quaternary structure, homodimer. As to expression, highly expressed in young fruits 15 days after anthesis (15-DAA). Also observed in stems and leaves.

It carries out the reaction an epoxide + H2O = an ethanediol. The catalysed reaction is (24S)-24,25-epoxycucurbitadienol + H2O = (24R)-24,25-dihydroxycucurbitadienol. The protein operates within secondary metabolite biosynthesis; terpenoid biosynthesis. Its function is as follows. Epoxide hydrolase involved in the biosynthesis of cucurbitacin and mogroside tetracyclic triterpene natural products (e.g. siamenoside I and mogrosides IV, V and VI). Cucurbitacins have cytotoxic properties and exhibit deterrent taste as a defense barrier against herbivores. Mogrosides are nonsugar highly oxygenated compounds used as high-intensity zero-calorie sweeteners; they also possess pharmacological properties such as regulating immunity, lowering blood sugar and lipid levels, protecting the liver, and acting as antioxidants and antitumor agents. Catalyzes the hydrolysis of aromatic epoxide-containing substrates, such as the conversion of 24,25-epoxycucurbitadienol to 24,25-dihydroxycucurbitadienol. The polypeptide is Epoxide hydrolase 2 (Siraitia grosvenorii (Monk's fruit)).